We begin with the raw amino-acid sequence, 222 residues long: PKHD-type hydroxylase P9301_13621 (222 aa).

The 95-residue stretch at Lys-81–Ser-175 folds into the Fe2OG dioxygenase domain. Fe cation contacts are provided by His-99, Asp-101, and His-156. Arg-166 contributes to the 2-oxoglutarate binding site.

Fe(2+) is required as a cofactor. Requires L-ascorbate as cofactor.

This chain is PKHD-type hydroxylase P9301_13621, found in Prochlorococcus marinus (strain MIT 9301).